Here is a 398-residue protein sequence, read N- to C-terminus: Proteasome-activating nucleotidase (398 aa).

Positions 18 to 59 (IMYLKKRIRQLELQVRTLEADKERLERELSRLRMEMSRLRQP) form a coiled coil. Residues 183-188 (GCGKTL) and H322 contribute to the ATP site. Positions 396–398 (MYG) are docks into pockets in the proteasome alpha-ring to cause gate opening.

Belongs to the AAA ATPase family. In terms of assembly, homohexamer. The hexameric complex has a two-ring architecture resembling a top hat that caps the 20S proteasome core at one or both ends. Upon ATP-binding, the C-terminus of PAN interacts with the alpha-rings of the proteasome core by binding to the intersubunit pockets.

The protein resides in the cytoplasm. ATPase which is responsible for recognizing, binding, unfolding and translocation of substrate proteins into the archaeal 20S proteasome core particle. Is essential for opening the gate of the 20S proteasome via an interaction with its C-terminus, thereby allowing substrate entry and access to the site of proteolysis. Thus, the C-termini of the proteasomal ATPase function like a 'key in a lock' to induce gate opening and therefore regulate proteolysis. Unfolding activity requires energy from ATP hydrolysis, whereas ATP binding alone promotes ATPase-20S proteasome association which triggers gate opening, and supports translocation of unfolded substrates. This chain is Proteasome-activating nucleotidase, found in Thermococcus onnurineus (strain NA1).